A 660-amino-acid polypeptide reads, in one-letter code: Cysteine--tRNA ligase, cytoplasmic (660 aa).

Residues 1–10 (MSENSSPKLE) are compositionally biased toward polar residues. The interval 1–20 (MSENSSPKLESTSAAAASTK) is disordered. Cys-65 is a binding site for Zn(2+). The 'HIGH' region signature appears at 67–77 (PTVYDASHMGH). Zn(2+) is bound by residues Cys-256, His-281, and Glu-285. Residues 314 to 318 (KMSKS) carry the 'KMSKS' region motif. Residue Lys-317 coordinates ATP. Disordered stretches follow at residues 563-584 (IEKK…KFEK) and 627-660 (QKEY…QSPQ). Residues 627 to 639 (QKEYDNQTKEHNN) are compositionally biased toward basic and acidic residues. The span at 643-660 (SLSTSTSSPTLTSTQSPQ) shows a compositional bias: low complexity.

Belongs to the class-I aminoacyl-tRNA synthetase family. Zn(2+) serves as cofactor.

It is found in the cytoplasm. It catalyses the reaction tRNA(Cys) + L-cysteine + ATP = L-cysteinyl-tRNA(Cys) + AMP + diphosphate. The protein is Cysteine--tRNA ligase, cytoplasmic (cysS) of Dictyostelium discoideum (Social amoeba).